The primary structure comprises 290 residues: NH(3)-dependent NAD(+) synthetase (290 aa).

33 to 40 (GVSGGVDS) contacts ATP. Aspartate 39 is a Mg(2+) binding site. Arginine 154 is a binding site for deamido-NAD(+). Threonine 174 is an ATP binding site. Residue glutamate 179 coordinates Mg(2+). The deamido-NAD(+) site is built by lysine 187 and aspartate 194. Residues lysine 203 and serine 225 each contribute to the ATP site.

Belongs to the NAD synthetase family. Homodimer.

It catalyses the reaction deamido-NAD(+) + NH4(+) + ATP = AMP + diphosphate + NAD(+) + H(+). The protein operates within cofactor biosynthesis; NAD(+) biosynthesis; NAD(+) from deamido-NAD(+) (ammonia route): step 1/1. Its function is as follows. Catalyzes the ATP-dependent amidation of deamido-NAD to form NAD. Uses ammonia as a nitrogen source. The polypeptide is NH(3)-dependent NAD(+) synthetase (Thermotoga neapolitana (strain ATCC 49049 / DSM 4359 / NBRC 107923 / NS-E)).